The sequence spans 493 residues: Voltage-gated potassium channel regulatory subunit KCNF1 (493 aa).

Residues 1 to 183 (MDASAEQSLP…KPESSCPARV (183 aa)) lie on the Cytoplasmic side of the membrane. Residues 184–204 (VAVLSFLLILVSSVVMCMGTI) traverse the membrane as a helical segment. Residues 224 to 244 (NVETACIGWFTLEYLLRLFSS) form a helical membrane-spanning segment. Over 245–249 (PNKLH) the chain is Cytoplasmic. Residues 250–270 (FALSFMNIVDVLAILPFYVSL) form a helical membrane-spanning segment. Residues 290-310 (QALRIMRIARIFKLARHSSGL) form a helical; Voltage-sensor membrane-spanning segment. Over 311 to 324 (QTLTYALKRSFKEL) the chain is Cytoplasmic. Residues 325–345 (GLLLMYLAVGIFVFSALGYTM) traverse the membrane as a helical segment. The pore-forming intramembrane region spans 358–378 (PQSFWWAIITMTTVGYGDIYP). The Selectivity filter motif lies at 370–375 (TVGYGD). The chain crosses the membrane as a helical span at residues 386-406 (NAAISFLCGVIAIALPIHPII). The Cytoplasmic portion of the chain corresponds to 407–493 (NNFVRYYNKQ…HHRTRLQSCK (87 aa)). Residues 434–468 (SSSAEGKPGGSRSDLDTLPPEPAAREGPSWGSRLK) form a disordered region.

The protein belongs to the potassium channel family. F (TC 1.A.1.2) subfamily. Kv5.1/KCNF1 sub-subfamily. As to quaternary structure, heterotetramer with KCNB1 or KCNB2.

Its subcellular location is the cell membrane. Its function is as follows. Regulatory alpha-subunit of the voltage-gated potassium (Kv) channel which, when coassembled with KCNB1 or KCNB2, can modulate their expression and their gating kinetics by acting on deactivation upon repolarization and inactivation during maintained depolarization. Accelerates inactivation but has relatively little effect on deactivation. Coexpression with KCNB1 or KCNB2 markedly slows inactivation. Each modulatory subunit has its own specific properties of regulation, and can lead to extensive inhibitions, to large changes in kinetics, and/or to large shifts in the voltage dependencies of the inactivation process. The gating kinetics depends on the nature and stoichiometry of the associated regulatory sunbunit. Fails to produce a potassium current when expressed alone. This Mus musculus (Mouse) protein is Voltage-gated potassium channel regulatory subunit KCNF1.